The primary structure comprises 522 residues: GMP synthase [glutamine-hydrolyzing] (522 aa).

The region spanning 9 to 204 is the Glutamine amidotransferase type-1 domain; sequence KILILDFGAQ…VVDICGCQML (196 aa). Cysteine 86 (nucleophile) is an active-site residue. Active-site residues include histidine 178 and glutamate 180. One can recognise a GMPS ATP-PPase domain in the interval 205–397; the sequence is WTAANIIEDQ…LGLPHAMVYR (193 aa). Residue 232-238 participates in ATP binding; it reads SGGVDSS.

As to quaternary structure, homodimer.

The enzyme catalyses XMP + L-glutamine + ATP + H2O = GMP + L-glutamate + AMP + diphosphate + 2 H(+). Its pathway is purine metabolism; GMP biosynthesis; GMP from XMP (L-Gln route): step 1/1. In terms of biological role, catalyzes the synthesis of GMP from XMP. This is GMP synthase [glutamine-hydrolyzing] (guaA) from Xylella fastidiosa (strain 9a5c).